The chain runs to 141 residues: Sec-independent protein translocase protein TatB (141 aa).

A helical transmembrane segment spans residues 1 to 21 (MFGISFSELLLVGLVALLVLG). A disordered region spans residues 74–141 (EAQKLLAPLT…SPPSETPRNP (68 aa)). Residues 89-115 (QETPPPAAESPAPSVPTPPPTSTPAVP) are compositionally biased toward pro residues. Low complexity predominate over residues 116 to 129 (PADAAAPPAVAAST). Residues 130–141 (PPSPPSETPRNP) show a composition bias toward pro residues.

This sequence belongs to the TatB family. As to quaternary structure, the Tat system comprises two distinct complexes: a TatABC complex, containing multiple copies of TatA, TatB and TatC subunits, and a separate TatA complex, containing only TatA subunits. Substrates initially bind to the TatABC complex, which probably triggers association of the separate TatA complex to form the active translocon.

It is found in the cell inner membrane. Part of the twin-arginine translocation (Tat) system that transports large folded proteins containing a characteristic twin-arginine motif in their signal peptide across membranes. Together with TatC, TatB is part of a receptor directly interacting with Tat signal peptides. TatB may form an oligomeric binding site that transiently accommodates folded Tat precursor proteins before their translocation. This is Sec-independent protein translocase protein TatB from Pseudomonas aeruginosa (strain ATCC 15692 / DSM 22644 / CIP 104116 / JCM 14847 / LMG 12228 / 1C / PRS 101 / PAO1).